The chain runs to 341 residues: Ribonucleoside-diphosphate reductase small chain A (341 aa).

The interval 1-20 (MGSLKEGQGRDMEEGESEEP) is disordered. Fe cation is bound by residues Asp87, Glu118, and His121. Residue Tyr125 is part of the active site. 3 residues coordinate Fe cation: Glu180, Glu214, and His217.

This sequence belongs to the ribonucleoside diphosphate reductase small chain family. As to quaternary structure, homodimer and heterodimer with TSO2. Heterotetramer of two R1 and two R2 chains. A radical transfer pathway may occur between Tyr-125 of protein R2 and R1. Homodimer contains a dinuclear non-heme iron center and a stable tyrosyl radical essential for activity. A transfer pathway may occur between Tyr-125 of protein R2 and R1. Interacts with CSN7. Fe cation serves as cofactor. In terms of tissue distribution, expressed in rosette leaves, cauline leaves, stems and flowers.

The protein localises to the cytoplasm. The enzyme catalyses a 2'-deoxyribonucleoside 5'-diphosphate + [thioredoxin]-disulfide + H2O = a ribonucleoside 5'-diphosphate + [thioredoxin]-dithiol. Its activity is regulated as follows. Inhibited by phenol, paracetamol, 2,4,6-trimethylphenol, resveratrol, furfuryl mercaptan, 2-thiophenthiol, phenylhydrazine, and hydroxyurea. Provides the precursors necessary for DNA synthesis. Catalyzes the biosynthesis of deoxyribonucleotides from the corresponding ribonucleotides. This Arabidopsis thaliana (Mouse-ear cress) protein is Ribonucleoside-diphosphate reductase small chain A (RNR2A).